The primary structure comprises 126 residues: Protein translocase subunit SecE (126 aa).

A run of 3 helical transmembrane segments spans residues W20 to M40, V42 to T62, and I97 to V117.

It belongs to the SecE/SEC61-gamma family. In terms of assembly, component of the Sec protein translocase complex. Heterotrimer consisting of SecY, SecE and SecG subunits. The heterotrimers can form oligomers, although 1 heterotrimer is thought to be able to translocate proteins. Interacts with the ribosome. Interacts with SecDF, and other proteins may be involved. Interacts with SecA.

It is found in the cell inner membrane. Functionally, essential subunit of the Sec protein translocation channel SecYEG. Clamps together the 2 halves of SecY. May contact the channel plug during translocation. This Vibrio alginolyticus protein is Protein translocase subunit SecE.